Consider the following 511-residue polypeptide: Bifunctional purine biosynthesis protein PurH (511 aa).

Positions 1-145 (MKKRALVSVS…KNHKFVSVIV (145 aa)) constitute an MGS-like domain.

This sequence belongs to the PurH family.

The catalysed reaction is (6R)-10-formyltetrahydrofolate + 5-amino-1-(5-phospho-beta-D-ribosyl)imidazole-4-carboxamide = 5-formamido-1-(5-phospho-D-ribosyl)imidazole-4-carboxamide + (6S)-5,6,7,8-tetrahydrofolate. It catalyses the reaction IMP + H2O = 5-formamido-1-(5-phospho-D-ribosyl)imidazole-4-carboxamide. Its pathway is purine metabolism; IMP biosynthesis via de novo pathway; 5-formamido-1-(5-phospho-D-ribosyl)imidazole-4-carboxamide from 5-amino-1-(5-phospho-D-ribosyl)imidazole-4-carboxamide (10-formyl THF route): step 1/1. It functions in the pathway purine metabolism; IMP biosynthesis via de novo pathway; IMP from 5-formamido-1-(5-phospho-D-ribosyl)imidazole-4-carboxamide: step 1/1. The protein is Bifunctional purine biosynthesis protein PurH of Bacillus cytotoxicus (strain DSM 22905 / CIP 110041 / 391-98 / NVH 391-98).